The following is a 104-amino-acid chain: L-rhamnose mutarotase (104 aa).

Residue Tyr18 coordinates substrate. His22 serves as the catalytic Proton donor. Residues Tyr41 and 76-77 (WW) contribute to the substrate site.

It belongs to the rhamnose mutarotase family. Homodimer.

The protein localises to the cytoplasm. It catalyses the reaction alpha-L-rhamnose = beta-L-rhamnose. It functions in the pathway carbohydrate metabolism; L-rhamnose metabolism. Functionally, involved in the anomeric conversion of L-rhamnose. The sequence is that of L-rhamnose mutarotase from Shigella flexneri serotype 5b (strain 8401).